Consider the following 163-residue polypeptide: 3-isopropylmalate dehydratase small subunit (163 aa).

This sequence belongs to the LeuD family. LeuD type 2 subfamily. Heterodimer of LeuC and LeuD.

It catalyses the reaction (2R,3S)-3-isopropylmalate = (2S)-2-isopropylmalate. It participates in amino-acid biosynthesis; L-leucine biosynthesis; L-leucine from 3-methyl-2-oxobutanoate: step 2/4. In terms of biological role, catalyzes the isomerization between 2-isopropylmalate and 3-isopropylmalate, via the formation of 2-isopropylmaleate. The protein is 3-isopropylmalate dehydratase small subunit of Ruminiclostridium cellulolyticum (strain ATCC 35319 / DSM 5812 / JCM 6584 / H10) (Clostridium cellulolyticum).